The chain runs to 947 residues: Netrin receptor unc-5 (947 aa).

Residues 43-141 (VIRNKPLRLQ…VHLAYMRKHF (99 aa)) enclose the Ig-like domain. Disulfide bonds link cysteine 53–cysteine 112, cysteine 160–cysteine 209, cysteine 243–cysteine 295, cysteine 247–cysteine 299, and cysteine 273–cysteine 285. One can recognise an Ig-like C2-type domain in the interval 139 to 226 (KHFLKSPVAQ…SRKTDPVEVQ (88 aa)). An N-linked (GlcNAc...) asparagine glycan is attached at asparagine 206. TSP type-1 domains are found at residues 230–300 (DGGW…VPCK) and 302–354 (DGGW…QLCT). Residues tryptophan 305 and tryptophan 308 are each glycosylated (C-linked (Man) tryptophan). The chain crosses the membrane as a helical span at residues 369 to 389 (GSVASIFIVASFILAILAMFC). The Cytoplasmic portion of the chain corresponds to 390–947 (CKRGNSKKSK…LSAFPQIVSP (558 aa)). The residue at position 510 (tyrosine 510) is a Phosphotyrosine. A ZU5 domain is found at 530-658 (NIVAAQIDSN…LNTNMFVQFE (129 aa)). The Death domain maps to 857-938 (ELARLLDMPN…DAVMVLERFL (82 aa)).

This sequence belongs to the unc-5 family. In terms of assembly, interacts (via cytoplasmic domain) with src-1 (via SH2 domain and SH3 domain). Interacts with madd-4. Interacts with unc-129; the interaction is direct. In terms of processing, phosphorylated on different cytoplasmic tyrosine residues. May be phosphorylated on tyrosine residues by src-1. Tyrosine phosphorylation is unc-6-dependent. Glycosylated via C-mannosylation by dpy-19 at Trp-305 and Trp-308. Expressed in cell bodies and axons of the VNC motor neurons that extend axons to the dorsal midline and within the ventral nerve cord. Expressed in gonadal distal tip cells (DTC).

It localises to the cell membrane. The protein localises to the membrane raft. The protein resides in the cell projection. Its subcellular location is the neuron projection. Functionally, receptor for netrin (unc-6) required for axon guidance. Mediates axon repulsion of neuronal growth cones in the developing nervous system upon ligand binding. Axon migration is mediated by the secreted unc-6, which promotes attraction of neurons and axons through binding to the unc-40 receptor, while repulsion requires both unc-5 and unc-40 receptors. Involved in the ventral-dorsal and anterior-posterior migration of distal tip cells along the body, which may be mediated by Wnt receptor mom-5, ced-10/Rac, ced-12/ELMO and mig-2/RhoG. This Caenorhabditis elegans protein is Netrin receptor unc-5.